The primary structure comprises 89 residues: Small ribosomal subunit protein uS15 (89 aa).

Belongs to the universal ribosomal protein uS15 family. As to quaternary structure, part of the 30S ribosomal subunit. Forms a bridge to the 50S subunit in the 70S ribosome, contacting the 23S rRNA.

Functionally, one of the primary rRNA binding proteins, it binds directly to 16S rRNA where it helps nucleate assembly of the platform of the 30S subunit by binding and bridging several RNA helices of the 16S rRNA. Forms an intersubunit bridge (bridge B4) with the 23S rRNA of the 50S subunit in the ribosome. This chain is Small ribosomal subunit protein uS15, found in Pseudomonas fluorescens (strain Pf0-1).